A 1208-amino-acid chain; its full sequence is ATP-dependent DNA helicase Q4 (1208 aa).

Disordered regions lie at residues 17 to 180 and 201 to 333; these read AFRR…ASLS and FLGA…AGKA. Position 27 is a phosphoserine (Ser-27). The segment covering 36–47 has biased composition (basic and acidic residues); it reads EETRALYREYRT. The span at 61–70 shows a compositional bias: low complexity; the sequence is SSESLPAAAE. Residues 86–100 show a composition bias toward polar residues; that stretch reads ATKSPQSTPGRSRQG. Phosphoserine is present on residues Ser-178 and Ser-180. Positions 273–283 are enriched in polar residues; it reads AQVQQESSQAG. The Helicase ATP-binding domain maps to 489–662; the sequence is VMRILSGIST…AQHLAVAEEP (174 aa). 502-509 provides a ligand contact to ATP; it reads LPTGAGKS. The DEAH box motif lies at 605–608; the sequence is DEAH. The Helicase C-terminal domain occupies 683 to 850; it reads DTDQALLTLL…AVKRLVQRVF (168 aa). Positions 853 and 855 each coordinate Zn(2+). Residues 860–888 form a disordered region; the sequence is PPSEQEGAVGGERPVPKYPPQEAEQLSHQ. Residues Cys-897 and His-900 each contribute to the Zn(2+) site. Residues 1111–1130 are disordered; sequence EEGQEPGGMEDAQGPEPGQA. An increases helicase activity about 5-fold (in a fragment starting at residue 427) region spans residues 1117–1208; the sequence is GGMEDAQGPE…ATEELLQVAR (92 aa).

The protein belongs to the helicase family. RecQ subfamily. Interacts with UBR1 and UBR2. Interacts with MCM10; this interaction regulates RECQL4 unwinding activity. Interacts (via residues 1-54) with TOPBP1. Zn(2+) serves as cofactor. As to expression, ubiquitously expressed, with highest levels in thymus and testis.

It localises to the cytoplasm. The protein resides in the nucleus. It carries out the reaction Couples ATP hydrolysis with the unwinding of duplex DNA by translocating in the 3'-5' direction.. The catalysed reaction is ATP + H2O = ADP + phosphate + H(+). Its function is as follows. An ATP-dependent DNA helicase which unwinds dsDNA with a 3'-overhang in a 3'-5' direction. Does not unwind more than 18 bp of dsDNA. May modulate chromosome segregation. The N-terminal domain (residues 1-54) binds DNA Y-shaped DNA better than ss- or dsDNA. The core helicase domain binds ssDNA. The chain is ATP-dependent DNA helicase Q4 (RECQL4) from Homo sapiens (Human).